Consider the following 360-residue polypeptide: E3 ubiquitin-protein ligase HAKAI homolog (360 aa).

A compositionally biased stretch (basic and acidic residues) spans 1-11 (MLQIRLRRDSP). A disordered region spans residues 1–24 (MLQIRLRRDSPTETGNGARPSPTE). The RING-type zinc-finger motif lies at 72–107 (CVRCDFPIAIYGRLIPCDHAFCLECARSDSICYLCD). The C2H2-type zinc-finger motif lies at 123–148 (FICAAPHCLRSFLKKLDFEAHVHDLH). A disordered region spans residues 156 to 360 (AEKEDGNQSD…QENRDGFGQE (205 aa)). Composition is skewed to polar residues over residues 163-179 (QSDVQSTMQQSSASEST), 186-214 (SQLQQSRELNRSASFAKSQSGFSQVQNYP), and 270-283 (YPTTESGSSQQFFN). Low complexity predominate over residues 293–304 (ESGGSEQSSLLG).

It belongs to the Hakai family. Interacts with MTB and VIR. Associates with MTA, MTB, FIP37 and VIR to form the m6A writer complex which is essential for adenosine methylation at specific mRNA sequences.

It localises to the nucleus speckle. The protein resides in the nucleus. It is found in the nucleoplasm. It catalyses the reaction S-ubiquitinyl-[E2 ubiquitin-conjugating enzyme]-L-cysteine + [acceptor protein]-L-lysine = [E2 ubiquitin-conjugating enzyme]-L-cysteine + N(6)-ubiquitinyl-[acceptor protein]-L-lysine.. In terms of biological role, probable E3 ubiquitin-protein ligase which is a subunit of the N6-methyltransferase complex, a multiprotein complex that mediates N6-methyladenosine (m6A) methylation at the 5'-[AG]GAC-3' consensus sites of some mRNAs. Associates with MTA, MTB, FIP37 and VIR to form the m6A writer complex which is essential for adenosine methylation at specific mRNA sequences. N6-methyladenosine (m6A) plays a role in mRNA stability, processing, translation efficiency and editing. This Arabidopsis thaliana (Mouse-ear cress) protein is E3 ubiquitin-protein ligase HAKAI homolog.